Here is a 257-residue protein sequence, read N- to C-terminus: UPF0246 protein Shal_1126 (257 aa).

This sequence belongs to the UPF0246 family.

The polypeptide is UPF0246 protein Shal_1126 (Shewanella halifaxensis (strain HAW-EB4)).